We begin with the raw amino-acid sequence, 510 residues long: D-alanine--D-alanyl carrier protein ligase (510 aa).

Residue 157 to 158 coordinates ATP; sequence TS. Asp202 is a D-alanine binding site. 297–302 serves as a coordination point for ATP; the sequence is NTYGPT. Residue Val306 participates in D-alanine binding. Residues Asp389 and Lys498 each coordinate ATP. Position 498 (Lys498) interacts with D-alanine.

The protein belongs to the ATP-dependent AMP-binding enzyme family. DltA subfamily.

Its subcellular location is the cytoplasm. The catalysed reaction is holo-[D-alanyl-carrier protein] + D-alanine + ATP = D-alanyl-[D-alanyl-carrier protein] + AMP + diphosphate. It participates in cell wall biogenesis; lipoteichoic acid biosynthesis. Catalyzes the first step in the D-alanylation of lipoteichoic acid (LTA), the activation of D-alanine and its transfer onto the D-alanyl carrier protein (Dcp) DltC. In an ATP-dependent two-step reaction, forms a high energy D-alanyl-AMP intermediate, followed by transfer of the D-alanyl residue as a thiol ester to the phosphopantheinyl prosthetic group of the Dcp. D-alanylation of LTA plays an important role in modulating the properties of the cell wall in Gram-positive bacteria, influencing the net charge of the cell wall. This is D-alanine--D-alanyl carrier protein ligase from Listeria monocytogenes serotype 4a (strain HCC23).